Consider the following 950-residue polypeptide: Bifunctional glutamine synthetase adenylyltransferase/adenylyl-removing enzyme (950 aa).

Positions 1-443 (MSLPSPLLPV…VFVTLIGDEE (443 aa)) are adenylyl removase. The segment at 450-950 (ERHFNELWDM…WQEWLESSTI (501 aa)) is adenylyl transferase.

This sequence belongs to the GlnE family. Mg(2+) is required as a cofactor.

The enzyme catalyses [glutamine synthetase]-O(4)-(5'-adenylyl)-L-tyrosine + phosphate = [glutamine synthetase]-L-tyrosine + ADP. The catalysed reaction is [glutamine synthetase]-L-tyrosine + ATP = [glutamine synthetase]-O(4)-(5'-adenylyl)-L-tyrosine + diphosphate. Functionally, involved in the regulation of glutamine synthetase GlnA, a key enzyme in the process to assimilate ammonia. When cellular nitrogen levels are high, the C-terminal adenylyl transferase (AT) inactivates GlnA by covalent transfer of an adenylyl group from ATP to specific tyrosine residue of GlnA, thus reducing its activity. Conversely, when nitrogen levels are low, the N-terminal adenylyl removase (AR) activates GlnA by removing the adenylyl group by phosphorolysis, increasing its activity. The regulatory region of GlnE binds the signal transduction protein PII (GlnB) which indicates the nitrogen status of the cell. This chain is Bifunctional glutamine synthetase adenylyltransferase/adenylyl-removing enzyme, found in Vibrio vulnificus (strain YJ016).